The sequence spans 151 residues: 3-hydroxyacyl-[acyl-carrier-protein] dehydratase FabZ (151 aa).

The active site involves His-54.

This sequence belongs to the thioester dehydratase family. FabZ subfamily.

The protein resides in the cytoplasm. The catalysed reaction is a (3R)-hydroxyacyl-[ACP] = a (2E)-enoyl-[ACP] + H2O. In terms of biological role, involved in unsaturated fatty acids biosynthesis. Catalyzes the dehydration of short chain beta-hydroxyacyl-ACPs and long chain saturated and unsaturated beta-hydroxyacyl-ACPs. The polypeptide is 3-hydroxyacyl-[acyl-carrier-protein] dehydratase FabZ (Idiomarina loihiensis (strain ATCC BAA-735 / DSM 15497 / L2-TR)).